A 544-amino-acid chain; its full sequence is Glycoprotein gp100 (544 aa).

The signal sequence occupies residues 1–19 (MKNFILLVFLFLLVSNSLG). Residues 20–489 (KSNKKDDQSP…SGGGGNKKLY (470 aa)) lie on the Extracellular side of the membrane. A glycan (N-linked (GlcNAc...) asparagine) is linked at Asn80. Positions 84-99 (EPQNNPIPTVSINPDQ) are enriched in polar residues. Residues 84 to 215 (EPQNNPIPTV…TPTRPSSSVS (132 aa)) form a disordered region. Low complexity-rich tracts occupy residues 126-142 (SKPT…TIPP), 150-165 (PQTT…TPTP), and 189-199 (PKPTKSSKPTK). N-linked (GlcNAc...) asparagine glycosylation is found at Asn224, Asn308, Asn332, Asn366, Asn380, Asn410, Asn422, and Asn478. A disordered region spans residues 444 to 480 (KPSTTDDDNNKNNDDGDSEIDSVGKSAVDSSKSNNNS). The helical transmembrane segment at 490 to 510 (LLIILPTVLFIIVAALVAIFI) threads the bilayer. Over 511 to 544 (KTRVSQNSGSKVNKNNNKKDSINVPFQMLDEITT) the chain is Cytoplasmic.

In terms of processing, N- and O-glycosylated.

It is found in the membrane. The protein is Glycoprotein gp100 (gppA) of Dictyostelium discoideum (Social amoeba).